Consider the following 211-residue polypeptide: Beta-crystallin B3 (211 aa).

Methionine 1 is subject to N-acetylmethionine. Alanine 2 carries the N-acetylalanine; in Beta-crystallin B3, N-terminally processed modification. The N-terminal arm stretch occupies residues 2–23 (AEQHGAPEQAAAGKSHGDLGGS). Beta/gamma crystallin 'Greek key' domains lie at 24-63 (YKVI…QVES) and 64-108 (GPWL…RPLN). Positions 109-113 (IDSPH) are connecting peptide. 2 Beta/gamma crystallin 'Greek key' domains span residues 114-155 (HKLH…RAIN) and 156-198 (GTWV…RRIR). The interval 200-211 (QKWHKRGRFPSS) is C-terminal arm.

This sequence belongs to the beta/gamma-crystallin family. As to quaternary structure, homo/heterodimer, or complexes of higher-order. The structure of beta-crystallin oligomers seems to be stabilized through interactions between the N-terminal arms.

Crystallins are the dominant structural components of the vertebrate eye lens. In Homo sapiens (Human), this protein is Beta-crystallin B3 (CRYBB3).